The sequence spans 148 residues: Snaclec 8 (148 aa).

Positions 1–23 (MGRFIFVSFSLLVVFFSLSGTEA) are cleaved as a signal peptide. A C-type lectin domain is found at 34-148 (YDQNCYKAFE…DTQFRLQEPG (115 aa)).

This sequence belongs to the snaclec family. As to quaternary structure, heterodimer; disulfide-linked. In terms of processing, contains disulfide bonds. Expressed by the venom gland.

The protein resides in the secreted. Functionally, interferes with one step of hemostasis (modulation of platelet aggregation, or coagulation cascade, for example). The protein is Snaclec 8 of Echis carinatus sochureki (Saw-scaled viper).